Here is a 394-residue protein sequence, read N- to C-terminus: Phosphopentomutase (394 aa).

Residues Asp-15, Asp-288, His-293, Asp-329, His-330, and His-341 each contribute to the Mn(2+) site.

It belongs to the phosphopentomutase family. Requires Mn(2+) as cofactor.

The protein resides in the cytoplasm. The enzyme catalyses 2-deoxy-alpha-D-ribose 1-phosphate = 2-deoxy-D-ribose 5-phosphate. It carries out the reaction alpha-D-ribose 1-phosphate = D-ribose 5-phosphate. It participates in carbohydrate degradation; 2-deoxy-D-ribose 1-phosphate degradation; D-glyceraldehyde 3-phosphate and acetaldehyde from 2-deoxy-alpha-D-ribose 1-phosphate: step 1/2. In terms of biological role, isomerase that catalyzes the conversion of deoxy-ribose 1-phosphate (dRib-1-P) and ribose 1-phosphate (Rib-1-P) to deoxy-ribose 5-phosphate (dRib-5-P) and ribose 5-phosphate (Rib-5-P), respectively. This Bacillus subtilis (strain 168) protein is Phosphopentomutase (drm).